We begin with the raw amino-acid sequence, 385 residues long: Protein-glutamate methylesterase/protein-glutamine glutaminase (385 aa).

At Asp-53 the chain carries 4-aspartylphosphate. The CheB-type methylesterase domain occupies 196–385; sequence KHKTGKIIVV…EIADHVLRRS (190 aa). Active-site residues include Ser-208, His-234, and Asp-330.

This sequence belongs to the CheB family. Phosphorylated by CheA. Phosphorylation of the N-terminal regulatory domain activates the methylesterase activity.

The protein localises to the cytoplasm. The catalysed reaction is [protein]-L-glutamate 5-O-methyl ester + H2O = L-glutamyl-[protein] + methanol + H(+). The enzyme catalyses L-glutaminyl-[protein] + H2O = L-glutamyl-[protein] + NH4(+). Functionally, involved in chemotaxis. Part of a chemotaxis signal transduction system that modulates chemotaxis in response to various stimuli. Catalyzes the demethylation of specific methylglutamate residues introduced into the chemoreceptors (methyl-accepting chemotaxis proteins or MCP) by CheR. Also mediates the irreversible deamidation of specific glutamine residues to glutamic acid. The polypeptide is Protein-glutamate methylesterase/protein-glutamine glutaminase (Borreliella burgdorferi (strain ATCC 35210 / DSM 4680 / CIP 102532 / B31) (Borrelia burgdorferi)).